A 359-amino-acid polypeptide reads, in one-letter code: RNA-binding protein 4B (359 aa).

RRM domains follow at residues 2-72 (VKLF…ASKN) and 78-148 (TKLH…LSTS). Residues 160–177 (SGCYRCGKEGHWSKECPV) form a CCHC-type zinc finger. The interval 196 to 359 (AVRTPYTMGY…YVDRARYSAF (164 aa)) is interaction with TNPO3.

Interacts with TNPO3, which may mediate nuclear import of the protein. In terms of tissue distribution, expressed in liver and kidney (at protein level). Ubiquitously expressed.

The protein localises to the nucleus. Its subcellular location is the nucleolus. Its function is as follows. Required for the translational activation of PER1 mRNA in response to circadian clock. Binds directly to the 3'-UTR of the PER1 mRNA. The chain is RNA-binding protein 4B (RBM4B) from Homo sapiens (Human).